The sequence spans 523 residues: Cytochrome P450 52A3-A (523 aa).

Residues 17 to 34 (WYTILFGAAVTYFLSIAL) traverse the membrane as a helical segment. C471 lines the heme pocket.

The protein belongs to the cytochrome P450 family. Heme is required as a cofactor.

It is found in the membrane. Its function is as follows. Together with an NADPH cytochrome P450 the enzyme system catalyzes the terminal hydroxylation as the first step in the assimilation of alkanes and fatty acids. The protein is Cytochrome P450 52A3-A (CYP52A3-A) of Candida maltosa (Yeast).